Here is an 85-residue protein sequence, read N- to C-terminus: Homeobox protein knotted-1-like 8 (85 aa).

Residues 1–21 (ELKHQLLRKYGGYLGGLRQEF) form the ELK domain. The homeobox; TALE-type DNA-binding region spans 22–85 (SKRKKKGKLP…NQRKRHWKPA (64 aa)).

Belongs to the TALE/KNOX homeobox family. Strongly expressed in ear inflorescence primordia and shoot meristem. Weakly expressed in embryos. Absent from leaves.

It localises to the nucleus. Probably binds to the DNA sequence 5'-TGAC-3'. This is Homeobox protein knotted-1-like 8 (KNOX8) from Zea mays (Maize).